A 298-amino-acid polypeptide reads, in one-letter code: N-acetylmuramic acid 6-phosphate etherase (298 aa).

In terms of domain architecture, SIS spans 55 to 218; sequence IHTQVSGGGR…STGLMIKSGK (164 aa). Glu-83 functions as the Proton donor in the catalytic mechanism. The active site involves Glu-114.

This sequence belongs to the GCKR-like family. MurNAc-6-P etherase subfamily. Homodimer.

The catalysed reaction is N-acetyl-D-muramate 6-phosphate + H2O = N-acetyl-D-glucosamine 6-phosphate + (R)-lactate. The protein operates within amino-sugar metabolism; 1,6-anhydro-N-acetylmuramate degradation. It participates in amino-sugar metabolism; N-acetylmuramate degradation. It functions in the pathway cell wall biogenesis; peptidoglycan recycling. Functionally, specifically catalyzes the cleavage of the D-lactyl ether substituent of MurNAc 6-phosphate, producing GlcNAc 6-phosphate and D-lactate. Together with AnmK, is also required for the utilization of anhydro-N-acetylmuramic acid (anhMurNAc) either imported from the medium or derived from its own cell wall murein, and thus plays a role in cell wall recycling. In Escherichia coli O6:K15:H31 (strain 536 / UPEC), this protein is N-acetylmuramic acid 6-phosphate etherase.